Here is a 363-residue protein sequence, read N- to C-terminus: Cleavage and termination factor 1 (363 aa).

An RRM domain is found at 7-85; the sequence is NVVFVGNIPY…RKIRVEFPSN (79 aa). A disordered region spans residues 291–325; the sequence is QPASATSSPPSVPQKIPSSNHKSQQANGSDQGNEG. The segment covering 306–322 has biased composition (polar residues); sequence IPSSNHKSQQANGSDQG.

As to quaternary structure, interacts with res2.

The protein localises to the nucleus. In terms of biological role, component of the cleavage factor I (CF I) involved in pre-mRNA 3'-end processing. This chain is Cleavage and termination factor 1 (ctf1), found in Schizosaccharomyces pombe (strain 972 / ATCC 24843) (Fission yeast).